Consider the following 151-residue polypeptide: uncharacterized protein (151 aa).

Positions 122–151 (GVAQRQVPTTGTHSFFHCTSEGNKEKPHHF) are disordered.

This is an uncharacterized protein from Homo sapiens (Human).